We begin with the raw amino-acid sequence, 351 residues long: Anthranilate phosphoribosyltransferase (351 aa).

5-phospho-alpha-D-ribose 1-diphosphate-binding positions include glycine 92, 95 to 96 (GD), threonine 100, 102 to 105 (NIST), 120 to 128 (KHGNRAASS), and serine 132. Glycine 92 provides a ligand contact to anthranilate. Serine 104 serves as a coordination point for Mg(2+). Asparagine 123 is a binding site for anthranilate. Residue arginine 178 coordinates anthranilate. Mg(2+)-binding residues include aspartate 236 and glutamate 237.

It belongs to the anthranilate phosphoribosyltransferase family. Homodimer. Mg(2+) is required as a cofactor.

The catalysed reaction is N-(5-phospho-beta-D-ribosyl)anthranilate + diphosphate = 5-phospho-alpha-D-ribose 1-diphosphate + anthranilate. Its pathway is amino-acid biosynthesis; L-tryptophan biosynthesis; L-tryptophan from chorismate: step 2/5. Functionally, catalyzes the transfer of the phosphoribosyl group of 5-phosphorylribose-1-pyrophosphate (PRPP) to anthranilate to yield N-(5'-phosphoribosyl)-anthranilate (PRA). The chain is Anthranilate phosphoribosyltransferase from Deinococcus geothermalis (strain DSM 11300 / CIP 105573 / AG-3a).